The following is a 183-amino-acid chain: Large ribosomal subunit protein bL32m (183 aa).

C99, C102, C112, and C115 together coordinate Zn(2+).

The protein belongs to the bacterial ribosomal protein bL32 family. As to quaternary structure, component of the mitochondrial large ribosomal subunit (mt-LSU).

Its subcellular location is the mitochondrion. Its function is as follows. Component of the mitochondrial large ribosomal subunit (mt-LSU). The mitochondrial ribosome (mitoribosome) is a large ribonucleoprotein complex responsible for the synthesis of proteins inside mitochondria. The sequence is that of Large ribosomal subunit protein bL32m (mrpl-32) from Caenorhabditis elegans.